A 354-amino-acid polypeptide reads, in one-letter code: Probable glucan endo-1,3-beta-glucosidase BG5 (354 aa).

The first 30 residues, 1–30 (MLYLPKKLFLFFFSCIVVIVNYNNSDFVNA), serve as a signal peptide directing secretion. Residue E137 is the Proton donor of the active site. Catalysis depends on E276, which acts as the Nucleophile. N286 carries an N-linked (GlcNAc...) asparagine glycan.

It belongs to the glycosyl hydrolase 17 family.

The protein resides in the secreted. It catalyses the reaction Hydrolysis of (1-&gt;3)-beta-D-glucosidic linkages in (1-&gt;3)-beta-D-glucans.. Functionally, may play a role in plant defense against pathogens. The polypeptide is Probable glucan endo-1,3-beta-glucosidase BG5 (Arabidopsis thaliana (Mouse-ear cress)).